The sequence spans 252 residues: Type II secretion system protein N (252 aa).

The Cytoplasmic segment spans residues 1–4 (MKNR). A helical transmembrane segment spans residues 5–25 (LTIGLLLAAIYLFWLLLSAPA). At 26–252 (RLLALTLSDD…QGEWLSEEKK (227 aa)) the chain is on the periplasmic side.

Belongs to the GSP N family.

The protein resides in the cell inner membrane. Functionally, involved in a type II secretion system (T2SS, formerly general secretion pathway, GSP) for the export of proteins. Required for the translocation of pullulanase. This is Type II secretion system protein N (pulN) from Klebsiella pneumoniae.